We begin with the raw amino-acid sequence, 334 residues long: MALRWGIVSVGLISSDFTAVLQTLPRSEHQVVAVAARDLSRAKEFAQKHDIPKAYGSYEELAKDPNVEVAYVGTQHPQHKAAVMLCLAAGKAVLCEKPMGVNAAEVREMVTEARSRGLFLMEAIWTRFFPASEALRSVLAQGTLGDLRVARAEFGKNLTHVPRAVDWAQAGGALLDLGIYCVQFISMVFGGQKPEKISVMGRRHETGVDDTVTVLLQYPGEVHGSFTCSITAQLSNTASVSGTKGMAQLLNPCWCPTELVVKGEHKEFLLPPVPKNCNFDNGAGMSYEAKHVRECLRKGLKESPVIPLVESELLADILEEVRRAIGVTFPQDKH.

This sequence belongs to the Gfo/Idh/MocA family. In terms of assembly, homodimer. As to expression, kidney.

It carries out the reaction (1R,2R)-1,2-dihydrobenzene-1,2-diol + NADP(+) = catechol + NADPH + H(+). The enzyme catalyses D-xylose + NADP(+) = D-xylono-1,5-lactone + NADPH + H(+). The sequence is that of Trans-1,2-dihydrobenzene-1,2-diol dehydrogenase (DHDH) from Macaca fascicularis (Crab-eating macaque).